The primary structure comprises 466 residues: Tissue alpha-L-fucosidase (466 aa).

The N-terminal stretch at 1-31 (MRAPGMRSRPAGPALLLLLLFLGAAESVRRA) is a signal peptide. A Phosphothreonine modification is found at T170. 3 N-linked (GlcNAc...) asparagine glycosylation sites follow: N241, N268, and N382.

Belongs to the glycosyl hydrolase 29 family. In terms of assembly, homotetramer.

It is found in the lysosome. It carries out the reaction an alpha-L-fucoside + H2O = L-fucose + an alcohol. It catalyses the reaction a neolactoside IV(2)-alpha-Fuc-nLc4Cer(d18:1(4E)) + H2O = a neolactoside nLc4Cer(d18:1(4E)) + L-fucose. The catalysed reaction is a neolactoside IV(2)-alpha-Fuc-nLc4Cer(d18:0) + H2O = a neolactoside nLc4Cer(d18:0) + L-fucose. Functionally, alpha-L-fucosidase is responsible for hydrolyzing the alpha-1,6-linked fucose joined to the reducing-end N-acetylglucosamine of the carbohydrate moieties of glycoproteins. The chain is Tissue alpha-L-fucosidase from Homo sapiens (Human).